The chain runs to 244 residues: Probable transcriptional regulatory protein BT0025 (244 aa).

It belongs to the TACO1 family.

Its subcellular location is the cytoplasm. This chain is Probable transcriptional regulatory protein BT0025, found in Borrelia turicatae (strain 91E135).